The chain runs to 356 residues: 4-hydroxybenzoate polyprenyltransferase, mitochondrial (356 aa).

Residues 1–44 (MITRSIGIARRSNSINCIVGSNTSTSYSLDESTKRWISTSTKQP) constitute a mitochondrion transit peptide. Transmembrane regions (helical) follow at residues 71-91 (VDKPIGTWLLYWPCTWSIAMA), 93-113 (PAGQLPSIYMLSLFGAGAFLM), 150-170 (AIGLLAGLLSSSLAILLQLNW), 195-215 (WPQFVLGLTFNWGALLGWCAL), 269-289 (WLSAFGVGTVASLTACGIASD), and 332-352 (IILFSGIVASTLLKEVFQILI).

It belongs to the UbiA prenyltransferase family. Mg(2+) serves as cofactor.

Its subcellular location is the mitochondrion inner membrane. It carries out the reaction an all-trans-polyprenyl diphosphate + 4-hydroxybenzoate = a 4-hydroxy-3-(all-trans-polyprenyl)benzoate + diphosphate. It participates in cofactor biosynthesis; ubiquinone biosynthesis. In terms of biological role, catalyzes the prenylation of para-hydroxybenzoate (PHB) with an all-trans polyprenyl group. Mediates the second step in the final reaction sequence of coenzyme Q (CoQ) biosynthesis, which is the condensation of the polyisoprenoid side chain with PHB, generating the first membrane-bound Q intermediate. This is 4-hydroxybenzoate polyprenyltransferase, mitochondrial (coq-2) from Caenorhabditis elegans.